A 393-amino-acid polypeptide reads, in one-letter code: Pre-mRNA-splicing regulator WTAP (393 aa).

The segment at 240–393 is disordered; sequence QQQIQTSGNR…SSVNVQGSVL (154 aa). A compositionally biased stretch (basic and acidic residues) spans 254-267; it reads ESKDEGETSGKDCG. Positions 272–286 are enriched in polar residues; it reads GPSNGGSSHQRTHSS. Over residues 310 to 319 the composition is skewed to basic and acidic residues; the sequence is LPNHSEERTS. Residues 320–353 are compositionally biased toward polar residues; it reads RGGSSYMNQLSTGYESVDSPTGSENSLTHQSNDT. Over residues 354-365 the composition is skewed to basic and acidic residues; it reads DSNHDSQEEKPV. A compositionally biased stretch (polar residues) spans 369-393; that stretch reads GNRTVSSRHLQNGLDSSVNVQGSVL.

The protein belongs to the fl(2)d family. As to quaternary structure, component of the WMM complex, a N6-methyltransferase complex composed of a catalytic subcomplex, named MAC, and of an associated subcomplex, named MACOM. Component of the MACOM subcomplex.

The protein resides in the nucleus speckle. It is found in the nucleus. It localises to the nucleoplasm. Functionally, associated component of the WMM complex, a complex that mediates N6-methyladenosine (m6A) methylation of RNAs, a modification that plays a role in the efficiency of mRNA splicing and RNA processing. This is Pre-mRNA-splicing regulator WTAP from Xenopus tropicalis (Western clawed frog).